We begin with the raw amino-acid sequence, 344 residues long: Peroxidase 36 (344 aa).

An N-terminal signal peptide occupies residues 1–28 (MNTKTVKSMAGIVLSQISLVALFPLCIC). 4 disulfides stabilise this stretch: Cys50/Cys130, Cys83/Cys88, Cys136/Cys337, and Cys215/Cys247. The active-site Proton acceptor is His81. Asp82, Val85, Gly87, Asp89, and Ser91 together coordinate Ca(2+). Pro178 provides a ligand contact to substrate. His208 is a heme b binding site. Thr209 contacts Ca(2+). Asn224 carries an N-linked (GlcNAc...) asparagine glycan. Ca(2+) is bound by residues Asp260, Thr263, and Asp268.

Belongs to the peroxidase family. Classical plant (class III) peroxidase subfamily. The cofactor is heme b. It depends on Ca(2+) as a cofactor.

It is found in the secreted. The enzyme catalyses 2 a phenolic donor + H2O2 = 2 a phenolic radical donor + 2 H2O. In terms of biological role, removal of H(2)O(2), oxidation of toxic reductants, biosynthesis and degradation of lignin, suberization, auxin catabolism, response to environmental stresses such as wounding, pathogen attack and oxidative stress. These functions might be dependent on each isozyme/isoform in each plant tissue. This Arabidopsis thaliana (Mouse-ear cress) protein is Peroxidase 36 (PER36).